A 402-amino-acid polypeptide reads, in one-letter code: Pyridinium-3,5-bisthiocarboxylic acid mononucleotide nickel insertion protein (402 aa).

This sequence belongs to the LarC family.

The enzyme catalyses Ni(II)-pyridinium-3,5-bisthiocarboxylate mononucleotide = pyridinium-3,5-bisthiocarboxylate mononucleotide + Ni(2+). Functionally, involved in the biosynthesis of a nickel-pincer cofactor ((SCS)Ni(II) pincer complex). Binds Ni(2+), and functions in nickel delivery to pyridinium-3,5-bisthiocarboxylic acid mononucleotide (P2TMN), to form the mature cofactor. Is thus probably required for the activation of nickel-pincer cofactor-dependent enzymes. The sequence is that of Pyridinium-3,5-bisthiocarboxylic acid mononucleotide nickel insertion protein from Thermotoga sp. (strain RQ2).